The sequence spans 260 residues: Ribosomal RNA small subunit methyltransferase A (260 aa).

S-adenosyl-L-methionine is bound by residues leucine 23, glycine 48, glutamate 69, aspartate 94, and asparagine 110.

Belongs to the class I-like SAM-binding methyltransferase superfamily. rRNA adenine N(6)-methyltransferase family. RsmA subfamily.

Its subcellular location is the cytoplasm. The catalysed reaction is adenosine(1518)/adenosine(1519) in 16S rRNA + 4 S-adenosyl-L-methionine = N(6)-dimethyladenosine(1518)/N(6)-dimethyladenosine(1519) in 16S rRNA + 4 S-adenosyl-L-homocysteine + 4 H(+). Specifically dimethylates two adjacent adenosines (A1518 and A1519) in the loop of a conserved hairpin near the 3'-end of 16S rRNA in the 30S particle. May play a critical role in biogenesis of 30S subunits. The polypeptide is Ribosomal RNA small subunit methyltransferase A (Thermotoga neapolitana (strain ATCC 49049 / DSM 4359 / NBRC 107923 / NS-E)).